The following is a 160-amino-acid chain: Calsequestrin-2 (160 aa).

The protein belongs to the calsequestrin family. Monomer, homodimer and homooligomer. Mostly monomeric in the absence of calcium. Forms higher oligomers in a calcium-dependent manner. Dimers associate to form tetramers, that then form linear homomer chains. Interacts with ASPH and TRDN. In terms of processing, phosphorylation in the C-terminus, probably by CK2, moderately increases calcium buffering capacity. Post-translationally, N-glycosylated.

The protein localises to the sarcoplasmic reticulum lumen. Calsequestrin is a high-capacity, moderate affinity, calcium-binding protein and thus acts as an internal calcium store in muscle. Calcium ions are bound by clusters of acidic residues at the protein surface, especially at the interface between subunits. Can bind around 60 Ca(2+) ions. Regulates the release of lumenal Ca(2+) via the calcium release channel RYR2; this plays an important role in triggering muscle contraction. Plays a role in excitation-contraction coupling in the heart and in regulating the rate of heart beats. The chain is Calsequestrin-2 (CASQ2) from Sus scrofa (Pig).